We begin with the raw amino-acid sequence, 243 residues long: Venom nerve growth factor (243 aa).

The signal sequence occupies residues 1–18 (MSMLCYTLIIAFLIGIWA). Residues 19 to 125 (APKSEDNVPL…TLNRNIWANN (107 aa)) constitute a propeptide that is removed on maturation. Over residues 47–66 (GLKTSRNTDQHHPTPKKSED) the composition is skewed to basic and acidic residues. The interval 47 to 70 (GLKTSRNTDQHHPTPKKSEDQELG) is disordered. Intrachain disulfides connect Cys-139–Cys-204, Cys-182–Cys-232, and Cys-192–Cys-234. The N-linked (GlcNAc...) asparagine glycan is linked to Asn-148.

It belongs to the NGF-beta family. Homodimer. Expressed by the venom gland.

The protein localises to the secreted. Functionally, nerve growth factor is important for the development and maintenance of the sympathetic and sensory nervous systems. It stimulates division and differentiation of sympathetic and embryonic sensory neurons as well as basal forebrain cholinergic neurons in the brain. Its relevance in the snake venom is not clear. However, it has been shown to inhibit metalloproteinase-dependent proteolysis of platelet glycoprotein Ib alpha, suggesting a metalloproteinase inhibition to prevent metalloprotease autodigestion and/or protection against prey proteases. Binds a lipid between the two protein chains in the homodimer. The lipid-bound form promotes histamine relase from mouse mast cells, contrary to the lipid-free form. The chain is Venom nerve growth factor from Bungarus multicinctus (Many-banded krait).